The chain runs to 209 residues: N-(5'-phosphoribosyl)anthranilate isomerase (209 aa).

The protein belongs to the TrpF family.

It carries out the reaction N-(5-phospho-beta-D-ribosyl)anthranilate = 1-(2-carboxyphenylamino)-1-deoxy-D-ribulose 5-phosphate. It participates in amino-acid biosynthesis; L-tryptophan biosynthesis; L-tryptophan from chorismate: step 3/5. The sequence is that of N-(5'-phosphoribosyl)anthranilate isomerase from Granulibacter bethesdensis (strain ATCC BAA-1260 / CGDNIH1).